A 319-amino-acid polypeptide reads, in one-letter code: MSIEEKIQLIEKGTLEVIDTEELKEVLKKEQPIAYTGYEPSGKIHLGHAVTVQKLKTLQKLGFKIKILLADFHAFLNGKGSIEEIAETAEYNMKCFKALGLDETTEFILGSSFQLNEDYASKVYKLATLTTLKRARRSMDQVSRHDENPKVASVVYPIMQTVDMVALDVDVALGGMEQRKIQMLARENLEKIDEKVPVCIHTPLLHGLDGDAKMSSSKGNYIAVDDSVEEITKKIKKSYCPQGETEGNPMIEIAETFVYPNQETLLIKRPEKFGGDIELTHEQLINDFSNGDLHPMDLKNGIKDFLIEHFAPVREYMEE.

Residue Tyr-35 coordinates L-tyrosine. Positions 40-48 match the 'HIGH' region motif; the sequence is PSGKIHLGH. The L-tyrosine site is built by Tyr-156, Gln-160, Asp-163, and Gln-178. Positions 213-217 match the 'KMSKS' region motif; that stretch reads KMSSS. Position 216 (Ser-216) interacts with ATP.

This sequence belongs to the class-I aminoacyl-tRNA synthetase family. TyrS type 3 subfamily. As to quaternary structure, homodimer.

The protein resides in the cytoplasm. It carries out the reaction tRNA(Tyr) + L-tyrosine + ATP = L-tyrosyl-tRNA(Tyr) + AMP + diphosphate + H(+). Functionally, catalyzes the attachment of tyrosine to tRNA(Tyr) in a two-step reaction: tyrosine is first activated by ATP to form Tyr-AMP and then transferred to the acceptor end of tRNA(Tyr). The polypeptide is Tyrosine--tRNA ligase (Methanobrevibacter smithii (strain ATCC 35061 / DSM 861 / OCM 144 / PS)).